Reading from the N-terminus, the 477-residue chain is Glutamate--tRNA ligase (477 aa).

A 'HIGH' region motif is present at residues 8–18 (PSPTGTLHIGT). Positions 247 to 251 (KLSKR) match the 'KMSKS' region motif. Lys-250 lines the ATP pocket.

Belongs to the class-I aminoacyl-tRNA synthetase family. Glutamate--tRNA ligase type 1 subfamily. As to quaternary structure, monomer.

It localises to the cytoplasm. It carries out the reaction tRNA(Glu) + L-glutamate + ATP = L-glutamyl-tRNA(Glu) + AMP + diphosphate. Catalyzes the attachment of glutamate to tRNA(Glu) in a two-step reaction: glutamate is first activated by ATP to form Glu-AMP and then transferred to the acceptor end of tRNA(Glu). This is Glutamate--tRNA ligase from Synechococcus sp. (strain CC9605).